The following is a 312-amino-acid chain: UDP-N-acetylenolpyruvoylglucosamine reductase (312 aa).

Residues 33–199 (RVGGKAEWYC…TGATLQLLPG (167 aa)) form the FAD-binding PCMH-type domain. Residue arginine 178 is part of the active site. The active-site Proton donor is serine 229. Glutamate 299 is a catalytic residue.

The protein belongs to the MurB family. FAD is required as a cofactor.

The protein resides in the cytoplasm. The enzyme catalyses UDP-N-acetyl-alpha-D-muramate + NADP(+) = UDP-N-acetyl-3-O-(1-carboxyvinyl)-alpha-D-glucosamine + NADPH + H(+). It functions in the pathway cell wall biogenesis; peptidoglycan biosynthesis. Cell wall formation. The polypeptide is UDP-N-acetylenolpyruvoylglucosamine reductase (Synechococcus sp. (strain JA-3-3Ab) (Cyanobacteria bacterium Yellowstone A-Prime)).